A 32-amino-acid chain; its full sequence is Photosystem I reaction center subunit XII (32 aa).

The chain crosses the membrane as a helical span at residues 9-28 (VYIALVVALIPGLLAWRLAT).

The protein belongs to the PsaM family.

The protein localises to the cellular thylakoid membrane. This is Photosystem I reaction center subunit XII from Nostoc sp. (strain PCC 7120 / SAG 25.82 / UTEX 2576).